Here is a 209-residue protein sequence, read N- to C-terminus: Large ribosomal subunit protein uL3 (209 aa).

Gln-150 is subject to N5-methylglutamine.

The protein belongs to the universal ribosomal protein uL3 family. Part of the 50S ribosomal subunit. Forms a cluster with proteins L14 and L19. Methylated by PrmB.

In terms of biological role, one of the primary rRNA binding proteins, it binds directly near the 3'-end of the 23S rRNA, where it nucleates assembly of the 50S subunit. This is Large ribosomal subunit protein uL3 from Aliivibrio fischeri (strain MJ11) (Vibrio fischeri).